A 251-amino-acid polypeptide reads, in one-letter code: Copper transport protein CTR1 (251 aa).

A helical transmembrane segment spans residues 90–110 (AFGIFVLLFFVAFLARMLEFV). The span at 157–173 (DESIDKQNSPQHEETTK) shows a compositional bias: basic and acidic residues. The interval 157-176 (DESIDKQNSPQHEETTKARG) is disordered. Residues 208 to 228 (MLAAMTYTLTYFFAVVIGSGV) form a helical membrane-spanning segment.

As to quaternary structure, oligomer.

It localises to the cell membrane. Required for high affinity copper (probably reduced Cu I) transport into the cell. This is Copper transport protein CTR1 (CTR1) from Candida albicans (strain SC5314 / ATCC MYA-2876) (Yeast).